The following is a 378-amino-acid chain: Glutamate 5-kinase (378 aa).

K14 is an ATP binding site. Residues S54, D141, and N153 each coordinate substrate. 173–174 (SD) provides a ligand contact to ATP. The PUA domain occupies 279 to 356 (AGRLTVDAGA…DEISAILGYD (78 aa)).

Belongs to the glutamate 5-kinase family.

The protein resides in the cytoplasm. It carries out the reaction L-glutamate + ATP = L-glutamyl 5-phosphate + ADP. It participates in amino-acid biosynthesis; L-proline biosynthesis; L-glutamate 5-semialdehyde from L-glutamate: step 1/2. Its function is as follows. Catalyzes the transfer of a phosphate group to glutamate to form L-glutamate 5-phosphate. The chain is Glutamate 5-kinase from Brucella abortus (strain S19).